The following is a 377-amino-acid chain: Protein FAM199X-B (377 aa).

Residues 240 to 254 show a composition bias toward basic and acidic residues; sequence KEHSPRQRCTRESWK. A disordered region spans residues 240 to 350; the sequence is KEHSPRQRCT…EQRQARKERI (111 aa). The segment covering 256 to 301 has biased composition (low complexity); it reads TSYSTASTSGVSGASVSSSSASMVSTASSTGSSGGNSASNSSANMS. A compositionally biased stretch (basic residues) spans 319-338; sequence DSKKRSKQRKLQQKALRKRQ. Residues 321-349 are a coiled coil; it reads KKRSKQRKLQQKALRKRQLKEQRQARKER. Over residues 339–350 the composition is skewed to basic and acidic residues; the sequence is LKEQRQARKERI.

This sequence belongs to the FAM199 family.

The protein is Protein FAM199X-B (fam199x-b) of Xenopus laevis (African clawed frog).